Here is a 248-residue protein sequence, read N- to C-terminus: 1-(5-phosphoribosyl)-5-[(5-phosphoribosylamino)methylideneamino] imidazole-4-carboxamide isomerase (248 aa).

Aspartate 8 functions as the Proton acceptor in the catalytic mechanism. The Proton donor role is filled by aspartate 129.

This sequence belongs to the HisA/HisF family.

The protein resides in the cytoplasm. The catalysed reaction is 1-(5-phospho-beta-D-ribosyl)-5-[(5-phospho-beta-D-ribosylamino)methylideneamino]imidazole-4-carboxamide = 5-[(5-phospho-1-deoxy-D-ribulos-1-ylimino)methylamino]-1-(5-phospho-beta-D-ribosyl)imidazole-4-carboxamide. It participates in amino-acid biosynthesis; L-histidine biosynthesis; L-histidine from 5-phospho-alpha-D-ribose 1-diphosphate: step 4/9. The polypeptide is 1-(5-phosphoribosyl)-5-[(5-phosphoribosylamino)methylideneamino] imidazole-4-carboxamide isomerase (Rhizobium leguminosarum bv. trifolii (strain WSM2304)).